We begin with the raw amino-acid sequence, 205 residues long: Casparian strip membrane protein 4 (205 aa).

Topologically, residues 1–58 are cytoplasmic; that stretch reads MDIEKTGSRREEEEPIVQKPKLEKGKGKAHVFAPPMNYSRIMEKHKQEKVSMAGWKRG. Residues 59 to 79 traverse the membrane as a helical segment; it reads VAIFDFVLRLIAAITAMAAAA. Topologically, residues 80-109 are extracellular; sequence KMATTEETLPFFTQFLQFSADYTDLPTLSS. A helical membrane pass occupies residues 110–130; sequence FVIVNSIVGGYLTLSLPFSIV. At 131–148 the chain is on the cytoplasmic side; it reads CILRPLAVPPRLFLILCD. A helical transmembrane segment spans residues 149-169; the sequence is TAMMGLTMVAASASAAIVYLA. At 170-205 the chain is on the extracellular side; that stretch reads HNGNSSSNWLPVCQQFGDFCKERVAPWWLPLLQRLF. A glycan (N-linked (GlcNAc...) asparagine) is linked at N173.

This sequence belongs to the Casparian strip membrane proteins (CASP) family. In terms of assembly, homodimer and heterodimers.

The protein localises to the cell membrane. Its function is as follows. Regulates membrane-cell wall junctions and localized cell wall deposition. Required for establishment of the Casparian strip membrane domain (CSD) and the subsequent formation of Casparian strips, a cell wall modification of the root endodermis that determines an apoplastic barrier between the intraorganismal apoplasm and the extraorganismal apoplasm and prevents lateral diffusion. The sequence is that of Casparian strip membrane protein 4 from Raphanus sativus (Radish).